Consider the following 76-residue polypeptide: U1-cyrtautoxin-As1b (76 aa).

4 disulfides stabilise this stretch: cysteine 23-cysteine 37, cysteine 30-cysteine 51, cysteine 36-cysteine 66, and cysteine 69-cysteine 76.

It belongs to the neurotoxin 21 family. In terms of tissue distribution, expressed by the venom gland.

Its subcellular location is the secreted. Its function is as follows. Neurotoxin with probable ion channel impairing activity. Is both paralytic and lethal, when injected into lepidopteran larvae. This is U1-cyrtautoxin-As1b from Apomastus schlingeri (Trap-door spider).